The primary structure comprises 128 residues: Large ribosomal subunit protein bL21 (128 aa).

The interval glycine 104–histidine 128 is disordered. Positions glutamate 116–histidine 128 are enriched in basic and acidic residues.

Belongs to the bacterial ribosomal protein bL21 family. As to quaternary structure, part of the 50S ribosomal subunit. Contacts protein L20.

In terms of biological role, this protein binds to 23S rRNA in the presence of protein L20. This chain is Large ribosomal subunit protein bL21, found in Nitrobacter hamburgensis (strain DSM 10229 / NCIMB 13809 / X14).